The primary structure comprises 348 residues: Probable protein phosphatase 2C 35 (348 aa).

The span at 11–24 shows a compositional bias: low complexity; that stretch reads RYPSSSSDGDSRGP. Residues 11 to 40 are disordered; that stretch reads RYPSSSSDGDSRGPLEANGVLKGKDQKPLG. Positions 52–342 constitute a PPM-type phosphatase domain; it reads VYSVLSQRGY…DDITIIIVQI (291 aa). 4 residues coordinate Mn(2+): Asp93, Gly94, Asp289, and Asp333.

The protein belongs to the PP2C family. Mg(2+) serves as cofactor. Requires Mn(2+) as cofactor.

It carries out the reaction O-phospho-L-seryl-[protein] + H2O = L-seryl-[protein] + phosphate. The enzyme catalyses O-phospho-L-threonyl-[protein] + H2O = L-threonyl-[protein] + phosphate. The protein is Probable protein phosphatase 2C 35 of Arabidopsis thaliana (Mouse-ear cress).